Reading from the N-terminus, the 361-residue chain is Holliday junction branch migration complex subunit RuvB (361 aa).

Polar residues-rich tracts occupy residues Met-1–Val-15 and Glu-28–Ala-40. A disordered region spans residues Met-1–Ser-41. Residues Pro-13–Tyr-203 form a large ATPase domain (RuvB-L) region. Residues Leu-42, Arg-43, Gly-84, Lys-87, Thr-88, Thr-89, Glu-150–Phe-152, Arg-193, Tyr-203, and Arg-240 contribute to the ATP site. Thr-88 is a binding site for Mg(2+). Positions Glu-204–Gln-274 are small ATPAse domain (RuvB-S). Residues Lys-277–Ser-361 are head domain (RuvB-H). Arg-332 and Arg-337 together coordinate DNA.

The protein belongs to the RuvB family. As to quaternary structure, homohexamer. Forms an RuvA(8)-RuvB(12)-Holliday junction (HJ) complex. HJ DNA is sandwiched between 2 RuvA tetramers; dsDNA enters through RuvA and exits via RuvB. An RuvB hexamer assembles on each DNA strand where it exits the tetramer. Each RuvB hexamer is contacted by two RuvA subunits (via domain III) on 2 adjacent RuvB subunits; this complex drives branch migration. In the full resolvosome a probable DNA-RuvA(4)-RuvB(12)-RuvC(2) complex forms which resolves the HJ.

The protein localises to the cytoplasm. The catalysed reaction is ATP + H2O = ADP + phosphate + H(+). Functionally, the RuvA-RuvB-RuvC complex processes Holliday junction (HJ) DNA during genetic recombination and DNA repair, while the RuvA-RuvB complex plays an important role in the rescue of blocked DNA replication forks via replication fork reversal (RFR). RuvA specifically binds to HJ cruciform DNA, conferring on it an open structure. The RuvB hexamer acts as an ATP-dependent pump, pulling dsDNA into and through the RuvAB complex. RuvB forms 2 homohexamers on either side of HJ DNA bound by 1 or 2 RuvA tetramers; 4 subunits per hexamer contact DNA at a time. Coordinated motions by a converter formed by DNA-disengaged RuvB subunits stimulates ATP hydrolysis and nucleotide exchange. Immobilization of the converter enables RuvB to convert the ATP-contained energy into a lever motion, pulling 2 nucleotides of DNA out of the RuvA tetramer per ATP hydrolyzed, thus driving DNA branch migration. The RuvB motors rotate together with the DNA substrate, which together with the progressing nucleotide cycle form the mechanistic basis for DNA recombination by continuous HJ branch migration. Branch migration allows RuvC to scan DNA until it finds its consensus sequence, where it cleaves and resolves cruciform DNA. Its function is as follows. Participates in UV-tolerance of Synechocystis PCC 6803. The chain is Holliday junction branch migration complex subunit RuvB from Synechocystis sp. (strain ATCC 27184 / PCC 6803 / Kazusa).